The primary structure comprises 1115 residues: Scavenger receptor cysteine-rich type 1 protein M130 (1115 aa).

Residues 1-46 form the signal peptide; sequence MDKLRMVLHENSGSADFRRCSAHLSSFTFAVVAVLSACLVTSSLGG. Residues 47 to 1044 lie on the Extracellular side of the membrane; the sequence is KDKELRLTGG…ESLHATGRSS (998 aa). SRCR domains are found at residues 51 to 151, 158 to 258, 265 to 365, 372 to 472, 477 to 577, 582 to 682, 718 to 818, 823 to 925, and 928 to 1028; these read LRLT…VTCS, MGLV…VICL, LRVV…VTCS, LRLK…ITCS, PRLV…VVCS, IRLV…VICS, LRLV…VICS, LRLI…ITCA, and IRLQ…VTCS. Cystine bridges form between Cys-76-Cys-140, Cys-89-Cys-150, Cys-120-Cys-130, Cys-183-Cys-247, Cys-196-Cys-257, Cys-227-Cys-237, Cys-290-Cys-354, Cys-303-Cys-364, Cys-334-Cys-344, Cys-397-Cys-461, Cys-410-Cys-471, Cys-441-Cys-451, Cys-502-Cys-566, Cys-515-Cys-576, Cys-546-Cys-556, Cys-607-Cys-671, Cys-620-Cys-681, Cys-651-Cys-661, Cys-743-Cys-807, Cys-756-Cys-817, Cys-787-Cys-797, Cys-863-Cys-924, and Cys-894-Cys-904. N-linked (GlcNAc...) asparagine glycosylation occurs at Asn-105. Residue Asn-139 is glycosylated (N-linked (GlcNAc...) asparagine). An N-linked (GlcNAc...) asparagine glycan is attached at Asn-936. 3 disulfide bridges follow: Cys-953–Cys-1017, Cys-966–Cys-1027, and Cys-997–Cys-1007. A helical transmembrane segment spans residues 1045 to 1065; sequence FVALAIFGVILLACLIAFLIW. Residues 1066 to 1115 lie on the Cytoplasmic side of the membrane; sequence TQKRRQRQRLSVFSGGENSVHQIQYREMNSCLKADETDMLNPSGDHSEVQ. Residues 1090 to 1093 carry the Internalization signal motif; it reads YREM.

Interacts with CSNK2B. Post-translationally, a soluble form (sCD163) is produced by proteolytic shedding which can be induced by lipopolysaccharide, phorbol ester and Fc region of immunoglobulin gamma. This cleavage is dependent on protein kinase C and tyrosine kinases and can be blocked by protease inhibitors. The shedding is inhibited by the tissue inhibitor of metalloproteinase TIMP3, and thus probably induced by membrane-bound metalloproteinases ADAMs. In terms of processing, phosphorylated. As to expression, expressed in monocytes and macrophages. Detected only in one population of monocytes (CD163+) which is in advanced maturation stage.

It localises to the secreted. The protein localises to the cell membrane. Its function is as follows. Involved in clearance and endocytosis of hemoglobin/haptoglobin complexes by macrophages and may thereby protect tissues from free hemoglobin-mediated oxidative damage. May play a role in the uptake and recycling of iron, via endocytosis of hemoglobin/haptoglobin and subsequent breakdown of heme. Binds hemoglobin/haptoglobin complexes in a calcium-dependent and pH-dependent manner. Induces a cascade of intracellular signals that involves tyrosine kinase-dependent calcium mobilization, inositol triphosphate production and secretion of IL6 and CSF1. May play a role in the process of infection of porcine monocytes/macrophages by African swine fever virus (ASFV). In case of porcine reproductive and respiratory syndrome virus (PRRSV), serves mediates virion attachment and plays a role in viral entry. In terms of biological role, after shedding, the soluble form (sCD163) may play an anti-inflammatory role. The sequence is that of Scavenger receptor cysteine-rich type 1 protein M130 (CD163) from Sus scrofa (Pig).